Reading from the N-terminus, the 68-residue chain is Amphipathic peptide VmCT1 (68 aa).

A signal peptide spans 1–23; that stretch reads MKTQFVILIVAVVLLQLISHSEA. Residue phenylalanine 36 is modified to Phenylalanine amide. The propeptide occupies 40 to 68; the sequence is GLRNFDDLDDTFEPEMSEADLKYLQDLLR.

Belongs to the non-disulfide-bridged peptide (NDBP) superfamily. Short antimicrobial peptide (group 4) family. As to expression, expressed by the venom gland.

The protein resides in the secreted. The protein localises to the target cell membrane. In terms of biological role, cationic amphipathic peptide with antibacterial activities against both Gram-positive and Gram-negative bacteria. Also shows antifungal activities. Is mildly hemolytic against human erythrocytes. In addition, when tested in vitro on the parasite Trypanosoma cruzi (responsible of the Chagas disease), is able to reduce the number of the three forms (epimastigote, trypomastigote and amastigote). Also shows antiplasmodial and cytotoxic activity (tested on Plasmodium gallinaceum, and MCF-7 breast cancer cell line). The chain is Amphipathic peptide VmCT1 from Vaejovis mexicanus smithi (Mexican scorpion).